Reading from the N-terminus, the 505-residue chain is Alpha-ketoglutarate-dependent dioxygenase FTO (505 aa).

T4 carries the post-translational modification Phosphothreonine. Residues 32 to 327 (TPKDDEFYQQ…SSTHRVAECS (296 aa)) are fe2OG dioxygenase domain. Residues R96 and Y108 each coordinate substrate. N205 lines the 2-oxoglutarate pocket. Residues 213 to 224 (PYLKEEPYFGMG) are loop L1; predicted to block binding of double-stranded DNA or RNA. N6-acetyllysine is present on K216. The Fe cation site is built by H231 and D233. 231-234 (HHDE) is a binding site for substrate. Y295 contacts 2-oxoglutarate. H307 is a binding site for Fe cation. 2-oxoglutarate contacts are provided by residues 316-318 (RFS), T320, and R322.

Belongs to the fto family. As to quaternary structure, monomer. May also exist as homodimer. The cofactor is Fe(2+).

The protein resides in the nucleus. It localises to the nucleus speckle. The protein localises to the cytoplasm. The catalysed reaction is a 5'-end (N(7)-methyl 5'-triphosphoguanosine)-(N(6),2'-O-dimethyladenosine) in mRNA + 2-oxoglutarate + O2 = a 5'-end (N(7)-methyl 5'-triphosphoguanosine)-(2'-O-methyladenosine) in mRNA + formaldehyde + succinate + CO2. The enzyme catalyses an N(6)-methyladenosine in mRNA + 2-oxoglutarate + O2 = an adenosine in mRNA + formaldehyde + succinate + CO2. It carries out the reaction N(6)-methyladenosine in U6 snRNA + 2-oxoglutarate + O2 = adenosine in U6 snRNA + formaldehyde + succinate + CO2. It catalyses the reaction a 5'-end (N(7)-methyl 5'-triphosphoguanosine)-(N(6),2'-O-dimethyladenosine) in U6 snRNA + 2-oxoglutarate + O2 = a 5'-end (N(7)-methyl 5'-triphosphoguanosine)-(2'-O-methyladenosine) in U6 snRNA + formaldehyde + succinate + CO2. The catalysed reaction is an N(1)-methyladenosine in tRNA + 2-oxoglutarate + O2 = an adenosine in tRNA + formaldehyde + succinate + CO2. Its activity is regulated as follows. Activated by ascorbate. Inhibited by N-oxalylglycine, fumarate and succinate. Its function is as follows. RNA demethylase that mediates oxidative demethylation of different RNA species, such as mRNAs, tRNAs and snRNAs, and acts as a regulator of fat mass, adipogenesis and energy homeostasis. Specifically demethylates N(6)-methyladenosine (m6A) RNA, the most prevalent internal modification of messenger RNA (mRNA) in higher eukaryotes. M6A demethylation by FTO affects mRNA expression and stability. Also able to demethylate m6A in U6 small nuclear RNA (snRNA). Mediates demethylation of N(6),2'-O-dimethyladenosine cap (m6A(m)), by demethylating the N(6)-methyladenosine at the second transcribed position of mRNAs and U6 snRNA. Demethylation of m6A(m) in the 5'-cap by FTO affects mRNA stability by promoting susceptibility to decapping. Also acts as a tRNA demethylase by removing N(1)-methyladenine from various tRNAs. Has no activity towards 1-methylguanine. Has no detectable activity towards double-stranded DNA. Also able to repair alkylated DNA and RNA by oxidative demethylation: demethylates single-stranded RNA containing 3-methyluracil, single-stranded DNA containing 3-methylthymine and has low demethylase activity towards single-stranded DNA containing 1-methyladenine or 3-methylcytosine. Ability to repair alkylated DNA and RNA is however unsure in vivo. Involved in the regulation of fat mass, adipogenesis and body weight, thereby contributing to the regulation of body size and body fat accumulation. Involved in the regulation of thermogenesis and the control of adipocyte differentiation into brown or white fat cells. Regulates activity of the dopaminergic midbrain circuitry via its ability to demethylate m6A in mRNAs. The chain is Alpha-ketoglutarate-dependent dioxygenase FTO from Pongo abelii (Sumatran orangutan).